The following is a 487-amino-acid chain: UDP-N-acetylmuramoyl-L-alanyl-D-glutamate--2,6-diaminopimelate ligase (487 aa).

The UDP-N-acetyl-alpha-D-muramoyl-L-alanyl-D-glutamate site is built by Leu-23 and Ser-25. 108 to 114 is an ATP binding site; that stretch reads GTNGKTS. UDP-N-acetyl-alpha-D-muramoyl-L-alanyl-D-glutamate-binding positions include 150-151, Ser-177, Gln-183, and Arg-185; that span reads TT. Residue Lys-217 is modified to N6-carboxylysine. Meso-2,6-diaminopimelate is bound by residues Arg-378, 402–405, Gly-453, and Glu-457; that span reads DNPR. The short motif at 402–405 is the Meso-diaminopimelate recognition motif element; that stretch reads DNPR.

The protein belongs to the MurCDEF family. MurE subfamily. The cofactor is Mg(2+). In terms of processing, carboxylation is probably crucial for Mg(2+) binding and, consequently, for the gamma-phosphate positioning of ATP.

Its subcellular location is the cytoplasm. The enzyme catalyses UDP-N-acetyl-alpha-D-muramoyl-L-alanyl-D-glutamate + meso-2,6-diaminopimelate + ATP = UDP-N-acetyl-alpha-D-muramoyl-L-alanyl-gamma-D-glutamyl-meso-2,6-diaminopimelate + ADP + phosphate + H(+). Its pathway is cell wall biogenesis; peptidoglycan biosynthesis. Its function is as follows. Catalyzes the addition of meso-diaminopimelic acid to the nucleotide precursor UDP-N-acetylmuramoyl-L-alanyl-D-glutamate (UMAG) in the biosynthesis of bacterial cell-wall peptidoglycan. This Pseudomonas aeruginosa (strain ATCC 15692 / DSM 22644 / CIP 104116 / JCM 14847 / LMG 12228 / 1C / PRS 101 / PAO1) protein is UDP-N-acetylmuramoyl-L-alanyl-D-glutamate--2,6-diaminopimelate ligase.